The primary structure comprises 446 residues: Bifunctional protein GlmU (446 aa).

The pyrophosphorylase stretch occupies residues 1-228 (MTKTAAVILA…AEELLGVNSR (228 aa)). UDP-N-acetyl-alpha-D-glucosamine-binding positions include 9 to 12 (LAAG), Lys-23, Gln-72, 77 to 78 (GT), 100 to 102 (YGD), Gly-140, Glu-154, Asn-169, and Asn-226. Asp-102 contacts Mg(2+). Residue Asn-226 coordinates Mg(2+). Residues 229–249 (SELAAAEAVIQGRLREKAMEG) are linker. Residues 250 to 446 (GATLTAPETV…AHMRRLTGKN (197 aa)) form an N-acetyltransferase region. UDP-N-acetyl-alpha-D-glucosamine contacts are provided by Arg-315 and Lys-333. Residue His-345 is the Proton acceptor of the active site. UDP-N-acetyl-alpha-D-glucosamine is bound by residues Tyr-348 and Asn-359. Acetyl-CoA contacts are provided by residues Ala-362, 368-369 (NY), Ser-387, Ala-405, and Arg-422.

This sequence in the N-terminal section; belongs to the N-acetylglucosamine-1-phosphate uridyltransferase family. In the C-terminal section; belongs to the transferase hexapeptide repeat family. In terms of assembly, homotrimer. Mg(2+) is required as a cofactor.

The protein resides in the cytoplasm. It catalyses the reaction alpha-D-glucosamine 1-phosphate + acetyl-CoA = N-acetyl-alpha-D-glucosamine 1-phosphate + CoA + H(+). The enzyme catalyses N-acetyl-alpha-D-glucosamine 1-phosphate + UTP + H(+) = UDP-N-acetyl-alpha-D-glucosamine + diphosphate. The protein operates within nucleotide-sugar biosynthesis; UDP-N-acetyl-alpha-D-glucosamine biosynthesis; N-acetyl-alpha-D-glucosamine 1-phosphate from alpha-D-glucosamine 6-phosphate (route II): step 2/2. It participates in nucleotide-sugar biosynthesis; UDP-N-acetyl-alpha-D-glucosamine biosynthesis; UDP-N-acetyl-alpha-D-glucosamine from N-acetyl-alpha-D-glucosamine 1-phosphate: step 1/1. It functions in the pathway bacterial outer membrane biogenesis; LPS lipid A biosynthesis. In terms of biological role, catalyzes the last two sequential reactions in the de novo biosynthetic pathway for UDP-N-acetylglucosamine (UDP-GlcNAc). The C-terminal domain catalyzes the transfer of acetyl group from acetyl coenzyme A to glucosamine-1-phosphate (GlcN-1-P) to produce N-acetylglucosamine-1-phosphate (GlcNAc-1-P), which is converted into UDP-GlcNAc by the transfer of uridine 5-monophosphate (from uridine 5-triphosphate), a reaction catalyzed by the N-terminal domain. This Rhodospirillum rubrum (strain ATCC 11170 / ATH 1.1.1 / DSM 467 / LMG 4362 / NCIMB 8255 / S1) protein is Bifunctional protein GlmU.